Here is an 87-residue protein sequence, read N- to C-terminus: Small ribosomal subunit protein bS20 (87 aa).

The protein belongs to the bacterial ribosomal protein bS20 family.

In terms of biological role, binds directly to 16S ribosomal RNA. In Rickettsia bellii (strain OSU 85-389), this protein is Small ribosomal subunit protein bS20.